The chain runs to 227 residues: Aspartyl protease inhibitor (227 aa).

A signal peptide spans 1–15 (MKLVVLCVLCGIALA). A compositionally biased stretch (basic and acidic residues) spans 88–109 (SLKSRMAGKKEKAVTPKEEDLP). A disordered region spans residues 88–116 (SLKSRMAGKKEKAVTPKEEDLPKAPQKPS). An intrachain disulfide couples cysteine 131 to cysteine 223.

It belongs to the protease inhibitor I33 family.

It localises to the secreted. Functionally, aspartyl protease inhibitor. This is Aspartyl protease inhibitor (API) from Ostertagia ostertagi (Brown stomach worm).